The following is a 144-amino-acid chain: Transmembrane protein 170A (144 aa).

Residues 1–50 (MEREGSGGSGGSAGLLQQILSLKVVPRVGNGTLCPNSTSLCSFPEMWYGV) lie on the Lumenal side of the membrane. N-linked (GlcNAc...) asparagine glycosylation is found at asparagine 30 and asparagine 36. Residues 51 to 71 (FLWALVSSLFFHVPAGLLALF) form a helical membrane-spanning segment. At 72–85 (TLRHHKYGRFMSVS) the chain is on the cytoplasmic side. Residues 86–106 (ILLMGIVGPITAGILTSAAIA) traverse the membrane as a helical segment. Topologically, residues 107–116 (GVYRAAGKEM) are lumenal. The helical transmembrane segment at 117 to 137 (IPFEALTLGTGQTFCVLVVSF) threads the bilayer. At 138-144 (LRILATL) the chain is on the cytoplasmic side.

Belongs to the TMEM170 family. In terms of assembly, interacts with RTN4.

Its subcellular location is the endoplasmic reticulum membrane. The protein resides in the nucleus envelope. In terms of biological role, acts as a regulator of endoplasmic reticulum (ER) and nuclear envelope (NE) morphogenesis. Affects the ratio between tubular ER and ER sheets by promoting sheet formation at the expense of tubules. Influences NE expansion, nuclear pore complex formation and proper localization of inner nuclear membrane proteins. The sequence is that of Transmembrane protein 170A (TMEM170A) from Homo sapiens (Human).